Consider the following 334-residue polypeptide: NH(3)-dependent NAD(+) synthetase (334 aa).

47-54 (GLSGGIDS) is a binding site for ATP. A Mg(2+)-binding site is contributed by Asp-53. Residue Arg-183 coordinates deamido-NAD(+). Residue Thr-203 coordinates ATP. Glu-208 contributes to the Mg(2+) binding site. Deamido-NAD(+)-binding residues include Lys-216 and Asp-223. ATP-binding residues include Lys-232 and Thr-254.

The protein belongs to the NAD synthetase family. In terms of assembly, homodimer.

It catalyses the reaction deamido-NAD(+) + NH4(+) + ATP = AMP + diphosphate + NAD(+) + H(+). It participates in cofactor biosynthesis; NAD(+) biosynthesis; NAD(+) from deamido-NAD(+) (ammonia route): step 1/1. Functionally, catalyzes the ATP-dependent amidation of deamido-NAD to form NAD. Uses ammonia as a nitrogen source. The polypeptide is NH(3)-dependent NAD(+) synthetase (Rhizobium meliloti (strain 1021) (Ensifer meliloti)).